A 1569-amino-acid chain; its full sequence is Zinc finger protein GLI3 (1569 aa).

Composition is skewed to polar residues over residues 1–10 and 416–432; these read MEAQSRSTTA and AAQQ…SSTG. Disordered stretches follow at residues 1 to 79 and 414 to 461; these read MEAQ…STSS and SEAA…DQPD. 5 C2H2-type zinc fingers span residues 485 to 510, 518 to 545, 551 to 575, 581 to 606, and 612 to 637; these read TNCH…NNDH, FVCR…MRRH, HKCT…LRSH, YVCE…NRTH, and YVCK…KTVH. 4 disordered regions span residues 625–731, 899–921, 1202–1228, and 1335–1364; these read DPSS…YTNS, SYDP…DGLP, PKSG…QNLD, and SNQT…GEQQ. Basic and acidic residues predominate over residues 637-653; sequence HGPEAHVTKKQRGDIHP. Residues 663–676 show a composition bias toward polar residues; sequence SHSQSRSPGQQTQG. The span at 678–704 shows a compositional bias: basic and acidic residues; the sequence is HGEHKDLSNTTSKHEECLQVRSVKTEK. Residues 705 to 731 show a composition bias toward polar residues; sequence PMSSQPSPGGKSSCSRQQSPISNYTNS. Residues 1335–1350 are compositionally biased toward low complexity; sequence SNQTTSGQNGNTTDGT. Positions 1352 to 1364 are enriched in polar residues; it reads SFLSTTQNGGEQQ.

This sequence belongs to the GLI C2H2-type zinc-finger protein family. In terms of processing, phosphorylation is essential for its proteolytic processing. Post-translationally, the repressor form (GLI3R), a C-terminally truncated form is generated from the full-length GLI3 protein (GLI3FL) through proteolytic processing.

Its subcellular location is the nucleus. The protein localises to the cytoplasm. Its function is as follows. Has a dual function as a transcriptional activator and a repressor of the sonic hedgehog (Shh) pathway, and may play a role in limb development. May bind to the minimal GLI-consensus sequence 5'-GGGTGGTC-3'. Has an essential role in the early embryonic patterning of mesoderm and neuroectoderm. The sequence is that of Zinc finger protein GLI3 (gli3) from Xenopus laevis (African clawed frog).